Reading from the N-terminus, the 162-residue chain is Protein FAM167B (162 aa).

Belongs to the FAM167 (SEC) family.

The polypeptide is Protein FAM167B (Fam167b) (Mus musculus (Mouse)).